The sequence spans 185 residues: ATP synthase subunit b (185 aa).

The chain crosses the membrane as a helical span at residues 27-47; the sequence is GALIWKGLNILAFLGIVYYFG.

Belongs to the ATPase B chain family. As to quaternary structure, F-type ATPases have 2 components, F(1) - the catalytic core - and F(0) - the membrane proton channel. F(1) has five subunits: alpha(3), beta(3), gamma(1), delta(1), epsilon(1). F(0) has three main subunits: a(1), b(2) and c(10-14). The alpha and beta chains form an alternating ring which encloses part of the gamma chain. F(1) is attached to F(0) by a central stalk formed by the gamma and epsilon chains, while a peripheral stalk is formed by the delta and b chains.

Its subcellular location is the cell inner membrane. Its function is as follows. F(1)F(0) ATP synthase produces ATP from ADP in the presence of a proton or sodium gradient. F-type ATPases consist of two structural domains, F(1) containing the extramembraneous catalytic core and F(0) containing the membrane proton channel, linked together by a central stalk and a peripheral stalk. During catalysis, ATP synthesis in the catalytic domain of F(1) is coupled via a rotary mechanism of the central stalk subunits to proton translocation. Component of the F(0) channel, it forms part of the peripheral stalk, linking F(1) to F(0). The protein is ATP synthase subunit b of Aquifex aeolicus (strain VF5).